A 331-amino-acid chain; its full sequence is Uroporphyrinogen decarboxylase (331 aa).

Residues 22 to 26 (RQAGR), Asp71, Tyr145, Ser199, and His308 contribute to the substrate site.

Belongs to the uroporphyrinogen decarboxylase family. Homodimer.

Its subcellular location is the cytoplasm. It carries out the reaction uroporphyrinogen III + 4 H(+) = coproporphyrinogen III + 4 CO2. Its pathway is porphyrin-containing compound metabolism; protoporphyrin-IX biosynthesis; coproporphyrinogen-III from 5-aminolevulinate: step 4/4. In terms of biological role, catalyzes the decarboxylation of four acetate groups of uroporphyrinogen-III to yield coproporphyrinogen-III. This Picrophilus torridus (strain ATCC 700027 / DSM 9790 / JCM 10055 / NBRC 100828 / KAW 2/3) protein is Uroporphyrinogen decarboxylase.